Consider the following 197-residue polypeptide: Glycerol-3-phosphate acyltransferase (197 aa).

5 consecutive transmembrane segments (helical) span residues 5-25, 54-74, 80-100, 112-132, and 153-173; these read IYIAALLLGYLFGSIPFGLIL, GLAAATLLLDALKGTAAVIIA, AEAAMLAALGAFLGHLFPVWL, IGVLIGLFWPGAIVFCLLWLA, and IFLWWFGHPALASLFAVLTLL.

This sequence belongs to the PlsY family. Probably interacts with PlsX.

Its subcellular location is the cell inner membrane. It carries out the reaction an acyl phosphate + sn-glycerol 3-phosphate = a 1-acyl-sn-glycero-3-phosphate + phosphate. It functions in the pathway lipid metabolism; phospholipid metabolism. Its function is as follows. Catalyzes the transfer of an acyl group from acyl-phosphate (acyl-PO(4)) to glycerol-3-phosphate (G3P) to form lysophosphatidic acid (LPA). This enzyme utilizes acyl-phosphate as fatty acyl donor, but not acyl-CoA or acyl-ACP. This Rhodopseudomonas palustris (strain HaA2) protein is Glycerol-3-phosphate acyltransferase.